We begin with the raw amino-acid sequence, 379 residues long: Cytochrome b (379 aa).

A run of 4 helical transmembrane segments spans residues 33 to 53 (FGSL…FLAM), 77 to 98 (WLIR…FIHV), 113 to 133 (WNIG…GYVL), and 178 to 198 (FFAF…VHLL). Heme b-binding residues include H83 and H97. H182 and H196 together coordinate heme b. An a ubiquinone-binding site is contributed by H201. The next 4 helical transmembrane spans lie at 226-246 (IKDL…ALFF), 288-308 (LGGV…PLLN), 320-340 (ITQT…WIGG), and 347-367 (FTMI…ILXP).

The protein belongs to the cytochrome b family. As to quaternary structure, the cytochrome bc1 complex contains 11 subunits: 3 respiratory subunits (MT-CYB, CYC1 and UQCRFS1), 2 core proteins (UQCRC1 and UQCRC2) and 6 low-molecular weight proteins (UQCRH/QCR6, UQCRB/QCR7, UQCRQ/QCR8, UQCR10/QCR9, UQCR11/QCR10 and a cleavage product of UQCRFS1). This cytochrome bc1 complex then forms a dimer. The cofactor is heme b.

The protein localises to the mitochondrion inner membrane. Functionally, component of the ubiquinol-cytochrome c reductase complex (complex III or cytochrome b-c1 complex) that is part of the mitochondrial respiratory chain. The b-c1 complex mediates electron transfer from ubiquinol to cytochrome c. Contributes to the generation of a proton gradient across the mitochondrial membrane that is then used for ATP synthesis. This chain is Cytochrome b (MT-CYB), found in Akodon toba (Chaco grass mouse).